A 359-amino-acid polypeptide reads, in one-letter code: Peptide chain release factor 1 (359 aa).

Gln235 is subject to N5-methylglutamine. Positions 287 to 312 (AQEASAMRSAQVGSGDRSERIRTYNF) are disordered.

It belongs to the prokaryotic/mitochondrial release factor family. In terms of processing, methylated by PrmC. Methylation increases the termination efficiency of RF1.

The protein localises to the cytoplasm. In terms of biological role, peptide chain release factor 1 directs the termination of translation in response to the peptide chain termination codons UAG and UAA. This chain is Peptide chain release factor 1, found in Chlamydia trachomatis serovar A (strain ATCC VR-571B / DSM 19440 / HAR-13).